The chain runs to 136 residues: Translation initiation factor 5A (136 aa).

A Hypusine modification is found at Lys37.

Belongs to the eIF-5A family.

It localises to the cytoplasm. Its function is as follows. Functions by promoting the formation of the first peptide bond. The chain is Translation initiation factor 5A (eIF5A) from Thermococcus onnurineus (strain NA1).